A 356-amino-acid chain; its full sequence is sn-glycerol-3-phosphate import ATP-binding protein UgpC (356 aa).

Positions 4 to 235 (LKLQAVTKSW…PASLFVASFI (232 aa)) constitute an ABC transporter domain. Residue 37-44 (GPSGCGKS) coordinates ATP.

The protein belongs to the ABC transporter superfamily. sn-glycerol-3-phosphate importer (TC 3.A.1.1.3) family. The complex is composed of two ATP-binding proteins (UgpC), two transmembrane proteins (UgpA and UgpE) and a solute-binding protein (UgpB).

Its subcellular location is the cell inner membrane. It catalyses the reaction sn-glycerol 3-phosphate(out) + ATP + H2O = sn-glycerol 3-phosphate(in) + ADP + phosphate + H(+). Functionally, part of the ABC transporter complex UgpBAEC involved in sn-glycerol-3-phosphate (G3P) import. Responsible for energy coupling to the transport system. The polypeptide is sn-glycerol-3-phosphate import ATP-binding protein UgpC (Escherichia coli O157:H7).